The chain runs to 61 residues: Protein translocase subunit SecE (61 aa).

The helical transmembrane segment at 39–59 threads the bilayer; the sequence is LGIILIGLIGMLIRIMGILVL.

This sequence belongs to the SecE/SEC61-gamma family. Component of the Sec protein translocase complex. Heterotrimer consisting of SecY (alpha), SecG (beta) and SecE (gamma) subunits. The heterotrimers can form oligomers, although 1 heterotrimer is thought to be able to translocate proteins. Interacts with the ribosome. May interact with SecDF, and other proteins may be involved.

The protein localises to the cell membrane. Essential subunit of the Sec protein translocation channel SecYEG. Clamps together the 2 halves of SecY. May contact the channel plug during translocation. This Pyrococcus abyssi (strain GE5 / Orsay) protein is Protein translocase subunit SecE.